The following is an 82-amino-acid chain: MPKRILEGVVVSDKGDKTVVVKVERTFLHPVLKKTVRRSKKYHAHDEANTYKVGEVARIIECAPKSKLKTWEVLPKGGAAQA.

The protein belongs to the universal ribosomal protein uS17 family. As to quaternary structure, part of the 30S ribosomal subunit.

In terms of biological role, one of the primary rRNA binding proteins, it binds specifically to the 5'-end of 16S ribosomal RNA. In Phenylobacterium zucineum (strain HLK1), this protein is Small ribosomal subunit protein uS17.